Here is a 149-residue protein sequence, read N- to C-terminus: Protein SprT-like (149 aa).

The region spanning Thr4–Leu143 is the SprT-like domain. His64 contributes to the Zn(2+) binding site. The active site involves Glu65. Position 68 (His68) interacts with Zn(2+).

The protein belongs to the SprT family. The cofactor is Zn(2+).

The protein resides in the cytoplasm. The protein is Protein SprT-like of Streptococcus pneumoniae (strain JJA).